Here is a 449-residue protein sequence, read N- to C-terminus: MELDNSHLVLGLGATGLSVVRYLCRQGITPLVMDSRDQPPGAEQLALEFPEVNLITGGFDCRYLVQASQIVISPGIAIDTPEIRAAIDMDIEVIGDVELFARAIKDRSPCVIGITGSNGKSTVTTLVGEMAKAAGLNYAVGGNIGIPVLDLLQKPVDLYILELSSFQLETTHSLNCISATCLNISEDHMDRYSDLEAYRQAKLALYDQSKRALFNREDSLTQPNDPMNQNSFGLTSPVNDEWGVKDGKIVHGTTEIASLQDVAIVGSHNHANLIAAMALAYHAGIDKEPMIQVAKNFTGLAHRCELVANIAAVAYVNDSKATNVGATVAALEGLGEHLGDIILIVGGDGKGADFTPLETVFNKVAHLITLGKDGDKIAALKEHSHKADSMADAVKQAAELATAGDIVLLSPACASLDMYKNFMARGDDFRQLAQALSVETLDSEASADV.

Position 116–122 (116–122 (GSNGKST)) interacts with ATP.

Belongs to the MurCDEF family.

The protein resides in the cytoplasm. The catalysed reaction is UDP-N-acetyl-alpha-D-muramoyl-L-alanine + D-glutamate + ATP = UDP-N-acetyl-alpha-D-muramoyl-L-alanyl-D-glutamate + ADP + phosphate + H(+). Its pathway is cell wall biogenesis; peptidoglycan biosynthesis. Cell wall formation. Catalyzes the addition of glutamate to the nucleotide precursor UDP-N-acetylmuramoyl-L-alanine (UMA). The sequence is that of UDP-N-acetylmuramoylalanine--D-glutamate ligase from Shewanella violacea (strain JCM 10179 / CIP 106290 / LMG 19151 / DSS12).